Consider the following 1556-residue polypeptide: Ras guanine nucleotide exchange factor G (1556 aa).

Disordered regions lie at residues 19 to 63 (IGNI…KNRG), 93 to 141 (LQLN…SSTT), 163 to 239 (SHVT…LSPS), and 254 to 296 (ATDS…NNNS). 2 stretches are compositionally biased toward low complexity: residues 25-54 (NNNNSNNNSNNNSVSNSNNNSSISINSGSN) and 96-141 (NDTD…SSTT). Residues 170-186 (DDDDDDESSSSEEDFDS) are compositionally biased toward acidic residues. Low complexity predominate over residues 196 to 216 (TSSTTATTTTTTTSVSPLTSS). The span at 256-271 (DSDNQSLEPCNNKTIV) shows a compositional bias: polar residues. Residues 279 to 295 (DNNNNHNNNNNNNNNNN) are compositionally biased toward low complexity. Residues 307 to 353 (NKTFLDLDEKIYLKIFGYLFAEDLCSINRVSKHLCNIINNQQLWKDL) enclose the F-box 1 domain. Positions 385–416 (NNNNNNNNNNNNNNNNSNISNNNNNINNSNGN) are disordered. The 48-residue stretch at 679–726 (VFDISRVSDILLIKIFRNLDSIKDLSVCQRVSKRWNKAIAISSLWEQL) folds into the F-box 2 domain. 2 disordered regions span residues 762–815 (QPSP…NGLN) and 827–1101 (GSNL…ITNN). Low complexity predominate over residues 827–848 (GSNLSNGGNSGSSFSPFNPLSG). The segment covering 849–866 (SNGGSSFGPFGSGGGGGS) has biased composition (gly residues). 2 stretches are compositionally biased toward low complexity: residues 867-880 (NSNIGGSSNQLNSS) and 888-910 (FLAMASGGSSVSSVTSTPSTIST). Residues 911-935 (NCTPTGGSTTNSPNFQSPMVSSSTV) are compositionally biased toward polar residues. Low complexity-rich tracts occupy residues 943-957 (SPNLSSPRSMSISLS) and 972-1053 (PDSS…IQPI). The segment covering 1059-1076 (VNNNGSQSDLSKISDLNA) has biased composition (polar residues). Low complexity predominate over residues 1077 to 1101 (NPNTTTTTTTNTIESSSSSSSITNN). The N-terminal Ras-GEF domain occupies 1116–1244 (MINVQKLMNL…LIRSFSRKLS (129 aa)). Residues 1254–1279 (IGITGGKSSRKGGGSGSGSGSGGGSG) are disordered. Residues 1264–1279 (KGGGSGSGSGSGGGSG) are compositionally biased toward gly residues. Residues 1317–1548 (PAEEIAKQLT…YRVSMQREPR (232 aa)) enclose the Ras-GEF domain.

Functionally, promotes the exchange of Ras-bound GDP by GTP. This chain is Ras guanine nucleotide exchange factor G (gefG), found in Dictyostelium discoideum (Social amoeba).